Reading from the N-terminus, the 353-residue chain is Rhodopsin (353 aa).

The Extracellular segment spans residues 1 to 36; it reads MNGTEGENFYIPFSNKTGLARSPFEYPQYYLAEPWK. Asn-2 and Asn-15 each carry an N-linked (GlcNAc...) asparagine glycan. A helical membrane pass occupies residues 37 to 61; that stretch reads YSVLAAYMFFLILVGFPVNFLTLFV. Residues 62–73 lie on the Cytoplasmic side of the membrane; sequence TVQHKKLRTPLN. The helical transmembrane segment at 74–96 threads the bilayer; the sequence is YILLNLAVANLFMVLFGFTLTMY. Residues 97–110 are Extracellular-facing; it reads SSMNGYFVFGPTMC. Cys-110 and Cys-187 are disulfide-bonded. A helical transmembrane segment spans residues 111–133; sequence NFEGFFATLGGEMSLWSLVVLAI. The short motif at 134 to 136 is the 'Ionic lock' involved in activated form stabilization element; the sequence is ERY. At 134 to 152 the chain is on the cytoplasmic side; the sequence is ERYIVICKPMGNFRFGSTH. The chain crosses the membrane as a helical span at residues 153–173; sequence AYMGVAFTWFMALSCAAPPLV. Over 174–202 the chain is Extracellular; it reads GWSRYLPEGMQCSCGPDYYTLNPNFNNES. The helical transmembrane segment at 203–224 threads the bilayer; it reads FVIYMFLVHFIIPFIVIFFCYG. Topologically, residues 225–252 are cytoplasmic; the sequence is RLLCTVKEAAAAQQESASTQKAEKEVTR. Residues 253–274 form a helical membrane-spanning segment; it reads MVVLMVIGFLVCWVPYASVAFY. Topologically, residues 275-286 are extracellular; it reads IFTHQGSDFGAT. A helical membrane pass occupies residues 287 to 308; sequence FMTVPAFFAKTSALYNPIIYIL. At Lys-296 the chain carries N6-(retinylidene)lysine. Over 309–353 the chain is Cytoplasmic; the sequence is MNKQFRNCMITTLCCGKNPLGDEDSGASTSKTEVSSVSTSQVSPA. The disordered stretch occupies residues 330-353; that stretch reads DEDSGASTSKTEVSSVSTSQVSPA. Positions 336 to 353 are enriched in low complexity; that stretch reads STSKTEVSSVSTSQVSPA.

This sequence belongs to the G-protein coupled receptor 1 family. Opsin subfamily. Post-translationally, phosphorylated on some or all of the serine and threonine residues present in the C-terminal region. Contains one covalently linked retinal chromophore.

The protein resides in the membrane. It localises to the cell projection. Its subcellular location is the cilium. It is found in the photoreceptor outer segment. In terms of biological role, photoreceptor required for image-forming vision at low light intensity. While most salt water fish species use retinal as chromophore, most freshwater fish use 3-dehydroretinal, or a mixture of retinal and 3-dehydroretinal. Light-induced isomerization of 11-cis to all-trans retinal triggers a conformational change that activates signaling via G-proteins. Subsequent receptor phosphorylation mediates displacement of the bound G-protein alpha subunit by arrestin and terminates signaling. This chain is Rhodopsin (RHO), found in Petromyzon marinus (Sea lamprey).